Consider the following 61-residue polypeptide: Large ribosomal subunit protein uL30 (61 aa).

It belongs to the universal ribosomal protein uL30 family. As to quaternary structure, part of the 50S ribosomal subunit.

This is Large ribosomal subunit protein uL30 from Laribacter hongkongensis (strain HLHK9).